An 814-amino-acid chain; its full sequence is Flagellar radial spoke protein 1 (814 aa).

At Arg-243 the chain carries Asymmetric dimethylarginine. The disordered stretch occupies residues 283 to 346; that stretch reads VQSISTGNRE…PPPPAPKVDP (64 aa). Positions 303-329 are enriched in acidic residues; that stretch reads PEEDEEEEKEEEKEEPEEGEEGEEGEG. Arg-428 is subject to Asymmetric dimethylarginine. MORN repeat units follow at residues 577–597, 600–622, 623–645, 646–662, 671–685, and 691–707; these read YFGS…FATG, YAGE…DGGT, YVGE…DGSV, YTGS…GVYW, GEWK…GTYE, and FEGE…ATYT. The disordered stretch occupies residues 739-769; that stretch reads GIPPGSGDEPQLDEEGQPIEDTDKPPLPAHP. Over residues 748-758 the composition is skewed to acidic residues; sequence PQLDEEGQPIE.

Asymmetrically dimethylated at Arg-243 and Arg-428 during flagellum resorption. Probably methylated by PRMT1.

The protein resides in the cytoplasm. Its subcellular location is the cytoskeleton. The protein localises to the flagellum axoneme. Flagellar radial spokes contribute to the regulation of dynein arm activity and thus the pattern of flagellar bending. They consist of a thin stalk, which is attached to the a subfiber of the outer doublet microtubule, and a bulbous head, which is attached to the stalk and appears to interact with the projections from the central pair of microtubules. The polypeptide is Flagellar radial spoke protein 1 (Chlamydomonas reinhardtii (Chlamydomonas smithii)).